The primary structure comprises 507 residues: UDP-glycosyltransferase 73D1 (507 aa).

UDP-alpha-D-glucose-binding positions include Ser298, Ser359 to Gln361, His376 to Glu384, and Phe398 to Gln401.

Belongs to the UDP-glycosyltransferase family.

The polypeptide is UDP-glycosyltransferase 73D1 (UGT73D1) (Arabidopsis thaliana (Mouse-ear cress)).